A 364-amino-acid chain; its full sequence is MVPELMFDEPRPGRPPRHLADLDAAGRASAVAELGLPAFRAKQLAHQYYGRLIADPRQMTDLPAAVRDRIAGAMFPNLLTASADITCDAGQTRKTLWRAVDGTMFESVLMRYPRRNTVCISSQAGCGMACPFCATGQGGLTRNLSTAEILEQVRAGAAALRDDFGDRLSNVVFMGMGEPLANYARVLAAVQRITARPPSGFGISARAVTVSTVGLAPAIRNLADARLGVTLALSLHAPDDGLRDTLVPVNNRWRISEALDAARYYANVTGRRVSIEYALIRDVNDQPWRADLLGKRLHRVLGPLAHVNLIPLNPTPGSDWDASPKPVEREFVKRVRAKGVSCTVRDTRGREISAACGQLAAVGG.

The Proton acceptor role is filled by Glu-106. The Radical SAM core domain occupies 112-350 (YPRRNTVCIS…SCTVRDTRGR (239 aa)). A disulfide bridge connects residues Cys-119 and Cys-356. Positions 126, 130, and 133 each coordinate [4Fe-4S] cluster. S-adenosyl-L-methionine-binding positions include 177 to 178 (GE), Ser-211, 234 to 236 (SLH), and Asn-313. Cys-356 acts as the S-methylcysteine intermediate in catalysis.

Belongs to the radical SAM superfamily. RlmN family. It depends on [4Fe-4S] cluster as a cofactor.

It is found in the cytoplasm. It carries out the reaction adenosine(2503) in 23S rRNA + 2 reduced [2Fe-2S]-[ferredoxin] + 2 S-adenosyl-L-methionine = 2-methyladenosine(2503) in 23S rRNA + 5'-deoxyadenosine + L-methionine + 2 oxidized [2Fe-2S]-[ferredoxin] + S-adenosyl-L-homocysteine. It catalyses the reaction adenosine(37) in tRNA + 2 reduced [2Fe-2S]-[ferredoxin] + 2 S-adenosyl-L-methionine = 2-methyladenosine(37) in tRNA + 5'-deoxyadenosine + L-methionine + 2 oxidized [2Fe-2S]-[ferredoxin] + S-adenosyl-L-homocysteine. In terms of biological role, specifically methylates position 2 of adenine 2503 in 23S rRNA and position 2 of adenine 37 in tRNAs. The protein is Probable dual-specificity RNA methyltransferase RlmN of Mycobacterium bovis (strain ATCC BAA-935 / AF2122/97).